Consider the following 545-residue polypeptide: Bifunctional purine biosynthesis protein PurH (545 aa).

Residues 1–150 form the MGS-like domain; the sequence is MTNTNRPIRR…KNHATVAIVT (150 aa).

It belongs to the PurH family.

It carries out the reaction (6R)-10-formyltetrahydrofolate + 5-amino-1-(5-phospho-beta-D-ribosyl)imidazole-4-carboxamide = 5-formamido-1-(5-phospho-D-ribosyl)imidazole-4-carboxamide + (6S)-5,6,7,8-tetrahydrofolate. The enzyme catalyses IMP + H2O = 5-formamido-1-(5-phospho-D-ribosyl)imidazole-4-carboxamide. It functions in the pathway purine metabolism; IMP biosynthesis via de novo pathway; 5-formamido-1-(5-phospho-D-ribosyl)imidazole-4-carboxamide from 5-amino-1-(5-phospho-D-ribosyl)imidazole-4-carboxamide (10-formyl THF route): step 1/1. The protein operates within purine metabolism; IMP biosynthesis via de novo pathway; IMP from 5-formamido-1-(5-phospho-D-ribosyl)imidazole-4-carboxamide: step 1/1. This is Bifunctional purine biosynthesis protein PurH from Bifidobacterium longum (strain DJO10A).